Here is a 763-residue protein sequence, read N- to C-terminus: Translation initiation factor IF-2 (763 aa).

The disordered stretch occupies residues 52–178 (KQKKVQTSQN…KDEAIKHETK (127 aa)). The segment covering 65-82 (SNDENKKITNKNTEKTTE) has biased composition (basic and acidic residues). Polar residues predominate over residues 86-96 (TVDSNKQNNSN). Basic and acidic residues-rich tracts occupy residues 105–116 (RNNDEESVSHFD) and 123–135 (KSEM…LNDK). Over residues 136–145 (KKNKNFKNTK) the composition is skewed to basic residues. Residues 146-161 (NKNSNNNKNSKNNKNN) are compositionally biased toward low complexity. Residues 162–178 (KNNDHNRKDEAIKHETK) are compositionally biased toward basic and acidic residues. In terms of domain architecture, tr-type G spans 265 to 434 (ERPPVITVMG…LMVAEMEELK (170 aa)). A G1 region spans residues 274–281 (GHVDHGKT). GTP is bound at residue 274–281 (GHVDHGKT). Residues 299 to 303 (GITQH) form a G2 region. Positions 320-323 (DTPG) are G3. Residues 320–324 (DTPGH) and 374–377 (NKID) each bind GTP. Positions 374 to 377 (NKID) are G4. The interval 410–412 (SAR) is G5.

This sequence belongs to the TRAFAC class translation factor GTPase superfamily. Classic translation factor GTPase family. IF-2 subfamily.

Its subcellular location is the cytoplasm. One of the essential components for the initiation of protein synthesis. Protects formylmethionyl-tRNA from spontaneous hydrolysis and promotes its binding to the 30S ribosomal subunits. Also involved in the hydrolysis of GTP during the formation of the 70S ribosomal complex. The chain is Translation initiation factor IF-2 from Finegoldia magna (strain ATCC 29328 / DSM 20472 / WAL 2508) (Peptostreptococcus magnus).